We begin with the raw amino-acid sequence, 663 residues long: Probable rhamnogalacturonate lyase B (663 aa).

The N-terminal stretch at 1–19 is a signal peptide; that stretch reads MRLRTSLGVASACASVASA. N-linked (GlcNAc...) asparagine glycans are attached at residues N27, N110, N143, N239, N285, N495, N535, N569, N597, and N638.

Belongs to the polysaccharide lyase 4 family.

Its subcellular location is the secreted. It catalyses the reaction Endotype eliminative cleavage of L-alpha-rhamnopyranosyl-(1-&gt;4)-alpha-D-galactopyranosyluronic acid bonds of rhamnogalacturonan I domains in ramified hairy regions of pectin leaving L-rhamnopyranose at the reducing end and 4-deoxy-4,5-unsaturated D-galactopyranosyluronic acid at the non-reducing end.. In terms of biological role, pectinolytic enzymes consist of four classes of enzymes: pectin lyase, polygalacturonase, pectin methylesterase and rhamnogalacturonase. Degrades the rhamnogalacturonan I (RG-I) backbone of pectin. The chain is Probable rhamnogalacturonate lyase B (rglB) from Aspergillus flavus (strain ATCC 200026 / FGSC A1120 / IAM 13836 / NRRL 3357 / JCM 12722 / SRRC 167).